We begin with the raw amino-acid sequence, 859 residues long: Bifunctional levopimaradiene synthase, chloroplastic (859 aa).

The transit peptide at 1–52 (MALLSSSLSSHIPTGAHHLTLNAYANTQCIPHFFSTLNAGTSAGKRSSLYLR) directs the protein to the chloroplast. Residues Asp-392, Asp-394, Asp-611, Asp-615, Asn-755, and Glu-763 each coordinate Mg(2+). Positions 392-395 (DIDD) match the DXDD motif motif. Positions 611-615 (DDLYD) match the DDXXD motif motif.

This sequence belongs to the terpene synthase family. Tpsd subfamily. The cofactor is Mg(2+). Mn(2+) serves as cofactor.

It is found in the plastid. The protein localises to the chloroplast. The enzyme catalyses (+)-copalyl diphosphate = abieta-8(14),12-diene + diphosphate. The catalysed reaction is (+)-copalyl diphosphate = abieta-7,13-diene + diphosphate. It participates in secondary metabolite biosynthesis; terpenoid biosynthesis. The protein operates within terpene metabolism; oleoresin biosynthesis. Functionally, terpene synthase (di-TPS) involved in the biosynthesis of diterpene natural products included in conifer oleoresin secretions and volatile emissions; these compounds contribute to biotic and abiotic stress defense against herbivores and pathogens. Catalyzes the conversion of (+)-copalyl diphosphate ((+)-CPP) to isopimaradiene. This is Bifunctional levopimaradiene synthase, chloroplastic from Picea sitchensis (Sitka spruce).